Here is a 494-residue protein sequence, read N- to C-terminus: Cytochrome P450 2G1 (494 aa).

C439 lines the heme pocket.

The protein belongs to the cytochrome P450 family. Heme serves as cofactor. As to expression, olfactory epithelium.

It is found in the endoplasmic reticulum membrane. The protein resides in the microsome membrane. The catalysed reaction is an organic molecule + reduced [NADPH--hemoprotein reductase] + O2 = an alcohol + oxidized [NADPH--hemoprotein reductase] + H2O + H(+). In terms of biological role, cytochromes P450 are a group of heme-thiolate monooxygenases. This isozyme seems to be implicated in olfaction. This chain is Cytochrome P450 2G1 (CYP2G1), found in Oryctolagus cuniculus (Rabbit).